The primary structure comprises 416 residues: Creatine kinase U-type, mitochondrial (416 aa).

The transit peptide at 1–39 directs the protein to the mitochondrion; that stretch reads MAGPFSRLLSARPGLRLLALAGAGSLAAGFLLRSEPVRA. The cardiolipin-binding stretch occupies residues 40–64; it reads ASERRRLYPPSAEYPDLRKHNNCMA. In terms of domain architecture, Phosphagen kinase N-terminal spans 45–131; the sequence is RLYPPSAEYP…FDPVIQERHN (87 aa). Phosphoserine is present on Ser151. One can recognise a Phosphagen kinase C-terminal domain in the interval 158-400; it reads YVLSSRVRTG…NFLIDCERRL (243 aa). Residue 161 to 165 coordinates ATP; that stretch reads SSRVR. Residue Ser196 is modified to Phosphoserine. Thr213 carries the phosphothreonine modification. His224 provides a ligand contact to ATP. Phosphoserine is present on Ser232. ATP is bound by residues Arg269, Arg325, and 353-358; that span reads RGTGGV. Position 355 is a phosphothreonine (Thr355). Position 365 is a phosphoserine (Ser365). Position 368 (Asp368) interacts with ATP.

Belongs to the ATP:guanido phosphotransferase family. In terms of assembly, exists as an octamer composed of four MTCK homodimers.

It localises to the mitochondrion inner membrane. The catalysed reaction is creatine + ATP = N-phosphocreatine + ADP + H(+). Functionally, reversibly catalyzes the transfer of phosphate between ATP and various phosphogens (e.g. creatine phosphate). Creatine kinase isoenzymes play a central role in energy transduction in tissues with large, fluctuating energy demands, such as skeletal muscle, heart, brain and spermatozoa. This Bos taurus (Bovine) protein is Creatine kinase U-type, mitochondrial (CKMT1).